The following is a 216-amino-acid chain: Protein ORM2 (216 aa).

The interval 1 to 50 (MIDRTKNESPAFEESPLTPNVSNLKPFPSQSNKISTPVTDHRRRRSSSVI) is disordered. Topologically, residues 1 to 78 (MIDRTKNESP…NMNATWVDQR (78 aa)) are cytoplasmic. Ser9 and Ser15 each carry phosphoserine. A compositionally biased stretch (polar residues) spans 17 to 38 (LTPNVSNLKPFPSQSNKISTPV). Thr18 carries the post-translational modification Phosphothreonine. Residues Ser22, Ser29, and Ser51 each carry the phosphoserine modification. A helical membrane pass occupies residues 79–99 (GAWLIHIVVIVLLRLFYSLFG). Residues 100 to 103 (STPK) lie on the Extracellular side of the membrane. A helical transmembrane segment spans residues 104-124 (WTWTLTNMTYIIGFYIMFHLV). The Cytoplasmic segment spans residues 125–148 (KGTPFDFNGGAYDNLTMWEQINDE). Residues 149–169 (TLYTPTRKFLLIVPIVLFLIS) form a helical membrane-spanning segment. Residues 170-177 (NQYYRNDM) are Extracellular-facing. The chain crosses the membrane as a helical span at residues 178 to 198 (TLFLSNLAVTVLIGVVPKLGI). Over 199-216 (THRLRISIPGITGRAQIS) the chain is Cytoplasmic.

The protein belongs to the ORM family. Component of the SPOTS complex, at least composed of LCB1/2 (LCB1 and/or LCB2), ORM1/2 (ORM1 and/or ORM2), SAC1 and TSC3. Post-translationally, phosphorylated in case of disruption of sphingolipid synthesis. Phosphorylation regulates the inhibitory activity of serine palmitoyltransferases (LCB1 and LCB2).

It is found in the endoplasmic reticulum membrane. Component of the SPOTS complex that acts as a negative regulator of sphingolipid synthesis. Acts by inhibiting serine palmitoyltransferases (LCB1 and LCB2) activity. Along with ORM1, plays a role in the phosphorylation of LAC1 and YPK1, the distribution of actin patches between mother and daughter cells, and in endocytosis. This is Protein ORM2 (ORM2) from Saccharomyces cerevisiae (strain ATCC 204508 / S288c) (Baker's yeast).